The sequence spans 327 residues: Olfactory receptor 51T1 (327 aa).

At 1-27 the chain is on the extracellular side; that stretch reads MAIFNNTTSSSSNFLLTAFPGLECAHV. N-linked (GlcNAc...) asparagine glycans are attached at residues asparagine 5 and asparagine 6. A helical transmembrane segment spans residues 28-48; that stretch reads WISIPVCCLYTIALLGNSMIF. At 49–56 the chain is on the cytoplasmic side; the sequence is LVIITKRR. A helical membrane pass occupies residues 57–77; the sequence is LHKPMYYFLSMLAAVDLCLTI. Over 78 to 101 the chain is Extracellular; sequence TTLPTVLGVLWFHAREISFKACFI. The helical transmembrane segment at 102–122 threads the bilayer; it reads QMFFVHAFSLLESSVLVAMAF. The Cytoplasmic portion of the chain corresponds to 123–141; the sequence is DRFVAICNPLNYATILTDR. The helical transmembrane segment at 142–162 threads the bilayer; it reads MVLVIGLVICIRPAVFLLPLL. The Extracellular portion of the chain corresponds to 163–198; that stretch reads VAINTVSFHGGHELSHPFCYHPEVIKYTYSKPWISS. The chain crosses the membrane as a helical span at residues 199-219; the sequence is FWGLFLQLYLNGTDVLFILFS. Over 220–239 the chain is Cytoplasmic; that stretch reads YVLILRTVLGIVARKKQQKA. A helical membrane pass occupies residues 240-260; it reads LSTCVCHICAVTIFYVPLISL. Topologically, residues 261–275 are extracellular; the sequence is SLAHRLFHSTPRVLC. A helical transmembrane segment spans residues 276–296; sequence STLANIYLLLPPVLNPIIYSL. Residues 297-327 lie on the Cytoplasmic side of the membrane; the sequence is KTKTIRQAMFQLLQSKGSWGFNVRGLRGRWD.

This sequence belongs to the G-protein coupled receptor 1 family.

The protein resides in the cell membrane. Odorant receptor. This is Olfactory receptor 51T1 (OR51T1) from Homo sapiens (Human).